Reading from the N-terminus, the 157-residue chain is Ribosomal RNA large subunit methyltransferase H (157 aa).

S-adenosyl-L-methionine is bound by residues leucine 73, glycine 105, and 124–129; that span reads LSKMTF.

It belongs to the RNA methyltransferase RlmH family. As to quaternary structure, homodimer.

It is found in the cytoplasm. The enzyme catalyses pseudouridine(1915) in 23S rRNA + S-adenosyl-L-methionine = N(3)-methylpseudouridine(1915) in 23S rRNA + S-adenosyl-L-homocysteine + H(+). Specifically methylates the pseudouridine at position 1915 (m3Psi1915) in 23S rRNA. This Parabacteroides distasonis (strain ATCC 8503 / DSM 20701 / CIP 104284 / JCM 5825 / NCTC 11152) protein is Ribosomal RNA large subunit methyltransferase H.